Consider the following 217-residue polypeptide: ATP phosphoribosyltransferase (217 aa).

It belongs to the ATP phosphoribosyltransferase family. Short subfamily. In terms of assembly, heteromultimer composed of HisG and HisZ subunits.

The protein resides in the cytoplasm. It catalyses the reaction 1-(5-phospho-beta-D-ribosyl)-ATP + diphosphate = 5-phospho-alpha-D-ribose 1-diphosphate + ATP. It functions in the pathway amino-acid biosynthesis; L-histidine biosynthesis; L-histidine from 5-phospho-alpha-D-ribose 1-diphosphate: step 1/9. In terms of biological role, catalyzes the condensation of ATP and 5-phosphoribose 1-diphosphate to form N'-(5'-phosphoribosyl)-ATP (PR-ATP). Has a crucial role in the pathway because the rate of histidine biosynthesis seems to be controlled primarily by regulation of HisG enzymatic activity. The chain is ATP phosphoribosyltransferase from Burkholderia lata (strain ATCC 17760 / DSM 23089 / LMG 22485 / NCIMB 9086 / R18194 / 383).